Here is a 573-residue protein sequence, read N- to C-terminus: LysM domain-containing protein ARB_01155/01156 (573 aa).

A signal peptide spans 1 to 18 (MIPRNLISGLFLLPFVVA). N-linked (GlcNAc...) asparagine glycosylation is found at N46, N71, and N283. The LysM domain occupies 373–419 (RYYEVVAGDQCNTIALHFGITVDAFLSLNTQIDERCSNLWIAYAYCV). The interval 375 to 405 (YEVVAGDQCNTIALHFGITVDAFLSLNTQID) is lysM domain.

The protein resides in the secreted. Might have a role in sequestration of chitin oligosaccharides (breakdown products of fungal cell walls that are released during invasion and act as triggers of host immunity) to dampen host defense. This Arthroderma benhamiae (strain ATCC MYA-4681 / CBS 112371) (Trichophyton mentagrophytes) protein is LysM domain-containing protein ARB_01155/01156.